Consider the following 87-residue polypeptide: Putative regulatory protein CHY_1489 (87 aa).

This sequence belongs to the RemA family.

The protein is Putative regulatory protein CHY_1489 of Carboxydothermus hydrogenoformans (strain ATCC BAA-161 / DSM 6008 / Z-2901).